The following is a 316-amino-acid chain: Pantothenate kinase (316 aa).

95-102 lines the ATP pocket; that stretch reads GSVAVGKS.

The protein belongs to the prokaryotic pantothenate kinase family.

Its subcellular location is the cytoplasm. The enzyme catalyses (R)-pantothenate + ATP = (R)-4'-phosphopantothenate + ADP + H(+). It functions in the pathway cofactor biosynthesis; coenzyme A biosynthesis; CoA from (R)-pantothenate: step 1/5. The polypeptide is Pantothenate kinase (Shewanella piezotolerans (strain WP3 / JCM 13877)).